Reading from the N-terminus, the 548-residue chain is Membrane protein insertase YidC (548 aa).

A helical transmembrane segment spans residues 6 to 26 (NLLVIALLFVSFMIWQAWEQD). The interval 28 to 56 (NPQPQTQQTTQTTTTAAGSAADQGVPASG) is disordered. Over residues 29-42 (PQPQTQQTTQTTTT) the composition is skewed to low complexity. Transmembrane regions (helical) follow at residues 350–370 (FVGN…GIMY), 424–444 (FPLI…MGSI), 458–478 (LSAQ…MFFI), and 499–519 (PVIF…YYIV).

The protein belongs to the OXA1/ALB3/YidC family. Type 1 subfamily. As to quaternary structure, interacts with the Sec translocase complex via SecD. Specifically interacts with transmembrane segments of nascent integral membrane proteins during membrane integration.

Its subcellular location is the cell inner membrane. Required for the insertion and/or proper folding and/or complex formation of integral membrane proteins into the membrane. Involved in integration of membrane proteins that insert both dependently and independently of the Sec translocase complex, as well as at least some lipoproteins. Aids folding of multispanning membrane proteins. This Salmonella typhimurium (strain LT2 / SGSC1412 / ATCC 700720) protein is Membrane protein insertase YidC.